A 196-amino-acid polypeptide reads, in one-letter code: Proteasome subunit beta 1 (196 aa).

Positions 1–6 (MEELPA) are cleaved as a propeptide — removed in mature form; by autocatalysis. The active-site Nucleophile is the Thr-7.

It belongs to the peptidase T1B family. As to quaternary structure, the 20S proteasome core is composed of 14 alpha and 14 beta subunits that assemble into four stacked heptameric rings, resulting in a barrel-shaped structure. The two inner rings, each composed of seven catalytic beta subunits, are sandwiched by two outer rings, each composed of seven alpha subunits. The catalytic chamber with the active sites is on the inside of the barrel. Has a gated structure, the ends of the cylinder being occluded by the N-termini of the alpha-subunits. Is capped at one or both ends by the proteasome regulatory ATPase, PAN.

The protein localises to the cytoplasm. It carries out the reaction Cleavage of peptide bonds with very broad specificity.. The formation of the proteasomal ATPase PAN-20S proteasome complex, via the docking of the C-termini of PAN into the intersubunit pockets in the alpha-rings, triggers opening of the gate for substrate entry. Interconversion between the open-gate and close-gate conformations leads to a dynamic regulation of the 20S proteasome proteolysis activity. In terms of biological role, component of the proteasome core, a large protease complex with broad specificity involved in protein degradation. The sequence is that of Proteasome subunit beta 1 from Saccharolobus solfataricus (strain ATCC 35092 / DSM 1617 / JCM 11322 / P2) (Sulfolobus solfataricus).